Reading from the N-terminus, the 389-residue chain is MYGRPQAEMEQEAGELSRWQAAHQAAQDNENSAPILNMSSSSGSSGVHTSWNQGLPSIQHFPHSAEMLGSPLVSVEAPGQNVNEGGPQFSMPLPERGMSYCPQATLTPSRMIYCQRMSPPQQEMTIFSGPQLMPVGEPNIPRVARPFGGNLRMPPNGLPVSASTGIPIMSHTGNPPVPYPGLSTVPSDETLLGPTVPSTEAQAVLPSMAQMLPPQDAHDLGMPPAESQSLLVLGSQDSLVSQPDSQEGPFLPEQPGPAPQTVEKNSRPQEGTGRRGSSEARPYCCNYENCGKAYTKRSHLVSHQRKHTGERPYSCNWESCSWSFFRSDELRRHMRVHTRYRPYKCDQCSREFMRSDHLKQHQKTHRPGPSDPQANNNNGEQDSPPAAGP.

Disordered stretches follow at residues 1 to 48 (MYGR…SGVH) and 239 to 279 (LVSQ…GSSE). The segment covering 26–38 (AQDNENSAPILNM) has biased composition (polar residues). Residues 264 to 278 (KNSRPQEGTGRRGSS) show a composition bias toward basic and acidic residues. C2H2-type zinc fingers lie at residues 283 to 307 (YCCNYENCGKAYTKRSHLVSHQRKH), 313 to 337 (YSCNWESCSWSFFRSDELRRHMRVH), and 343 to 365 (YKCDQCSREFMRSDHLKQHQKTH). Positions 356–389 (DHLKQHQKTHRPGPSDPQANNNNGEQDSPPAAGP) are disordered. A compositionally biased stretch (polar residues) spans 372–381 (PQANNNNGEQ).

It belongs to the Sp1 C2H2-type zinc-finger protein family.

The protein localises to the nucleus. In terms of biological role, transcription repressor that binds to the promoter of target genes and prevents their expression. Acts as a negative regulator of epithelial-mesenchymal transition and metastasis in breast cancer. Specifically binds the 5'-CACCC-3' sequence in the promoter of ID1, a key metastasis regulator in breast cancer, and repress its expression. May be a germ cell-specific transcription factor that plays important roles in spermatid differentiation and oocyte development. The protein is Krueppel-like factor 17 (KLF17) of Homo sapiens (Human).